A 175-amino-acid polypeptide reads, in one-letter code: SsrA-binding protein (175 aa).

Disordered regions lie at residues Met-1–Ala-29 and Lys-152–Ser-175.

Belongs to the SmpB family.

It localises to the cytoplasm. Its function is as follows. Required for rescue of stalled ribosomes mediated by trans-translation. Binds to transfer-messenger RNA (tmRNA), required for stable association of tmRNA with ribosomes. tmRNA and SmpB together mimic tRNA shape, replacing the anticodon stem-loop with SmpB. tmRNA is encoded by the ssrA gene; the 2 termini fold to resemble tRNA(Ala) and it encodes a 'tag peptide', a short internal open reading frame. During trans-translation Ala-aminoacylated tmRNA acts like a tRNA, entering the A-site of stalled ribosomes, displacing the stalled mRNA. The ribosome then switches to translate the ORF on the tmRNA; the nascent peptide is terminated with the 'tag peptide' encoded by the tmRNA and targeted for degradation. The ribosome is freed to recommence translation, which seems to be the essential function of trans-translation. This chain is SsrA-binding protein, found in Koribacter versatilis (strain Ellin345).